The primary structure comprises 363 residues: MSTSTIRVAIAGVGNCATSLIQGVEYYRNADPSETVPGLMHVKFGDYHVGDIEFVAAFDVDAEKVGIDLADATEASQNCTIKIADVPQTGINVLRGPTLDGLGDHYRATIDESTAEPVDVVQALIDAKADVLVSYLPVGSEEADKFYAQAAIDAGCAFVNALPVFIASDPEWAKKFTDAGIPIVGDDIKSQIGATITHRVLARLFEERGVRVDRTMQLNVGGNMDFKNMLDRNRLESKKVSKTQAVTSNIPDGPLSGKVEDRNVHIGPSDHVQWLDDRKWAYVRLEGTAFGGVPLNLEYKLEVWDSPNSAGIIIDAVRAAKIALDRGIGGPIMPASSYLMKSPPEQLPDDVARERLEAFIIEA.

NAD(+)-binding residues include D68, A127, Y147, S190, D225, and K238.

Belongs to the myo-inositol 1-phosphate synthase family. As to quaternary structure, monomer. Requires NAD(+) as cofactor.

It carries out the reaction D-glucose 6-phosphate = 1D-myo-inositol 3-phosphate. The protein operates within polyol metabolism; myo-inositol biosynthesis; myo-inositol from D-glucose 6-phosphate: step 1/2. In terms of biological role, key enzyme in myo-inositol biosynthesis pathway that catalyzes the conversion of glucose 6-phosphate to 1D-myo-inositol 3-phosphate in a NAD-dependent manner. Plays a key role in oxidative stress resistance as its product is the precursor of the protective antioxidant mycothiol (MSH or AcCys-GlcN-Ins). The polypeptide is Inositol-3-phosphate synthase (Corynebacterium glutamicum (strain ATCC 13032 / DSM 20300 / JCM 1318 / BCRC 11384 / CCUG 27702 / LMG 3730 / NBRC 12168 / NCIMB 10025 / NRRL B-2784 / 534)).